The primary structure comprises 197 residues: Fucoxanthin-chlorophyll a-c binding protein E, chloroplastic (197 aa).

The N-terminal 31 residues, 1-31 (MKFVVFASLLASAARFAPAQQSARTSVATNM), are a transit peptide targeting the chloroplast. 3 consecutive transmembrane segments (helical) span residues 73 to 94 (ISMLAVAGYLVQENGIRLPGDI), 114 to 134 (ISGAGIAQIVAFIGFLELAVM), and 174 to 196 (GRAAQMGILALMVHEQLGVSLIP).

This sequence belongs to the fucoxanthin chlorophyll protein family. The LHC complex of chromophytic algae is composed of fucoxanthin, chlorophyll A and C bound non-covalently by fucoxanthin chlorophyll proteins (FCPs). The ratio of the pigments in LHC; fucoxanthin: chlorophyll C: chlorophyll A; (0.6-1): (0.1-0.3): (1).

Its subcellular location is the plastid. It localises to the chloroplast thylakoid membrane. Its function is as follows. The light-harvesting complex (LHC) functions as a light receptor, it captures and delivers excitation energy to photosystems with which it is closely associated. Energy is transferred from the carotenoid and chlorophyll C (or B) to chlorophyll A and the photosynthetic reaction centers where it is used to synthesize ATP and reducing power. The protein is Fucoxanthin-chlorophyll a-c binding protein E, chloroplastic (FCPE) of Phaeodactylum tricornutum (Diatom).